Here is a 350-residue protein sequence, read N- to C-terminus: Arabinogalactan endo-beta-1,4-galactanase A (350 aa).

An N-terminal signal peptide occupies residues 1–16; sequence MIYPLLLSALPLLSSA. Asn128 carries an N-linked (GlcNAc...) asparagine glycan. The active-site Proton donor is Glu152. Catalysis depends on Glu262, which acts as the Nucleophile.

It belongs to the glycosyl hydrolase 53 family.

It is found in the secreted. The catalysed reaction is The enzyme specifically hydrolyzes (1-&gt;4)-beta-D-galactosidic linkages in type I arabinogalactans.. Endogalactanase involved in the degradation of plant cell wall polysaccharides, and more particularly of hairy regions of pectin. In Aspergillus niger, this protein is Arabinogalactan endo-beta-1,4-galactanase A (galA).